A 429-amino-acid polypeptide reads, in one-letter code: Glutamate-1-semialdehyde 2,1-aminomutase (429 aa).

Lys-265 bears the N6-(pyridoxal phosphate)lysine mark.

This sequence belongs to the class-III pyridoxal-phosphate-dependent aminotransferase family. HemL subfamily. Homodimer. Requires pyridoxal 5'-phosphate as cofactor.

It is found in the cytoplasm. The enzyme catalyses (S)-4-amino-5-oxopentanoate = 5-aminolevulinate. The protein operates within porphyrin-containing compound metabolism; protoporphyrin-IX biosynthesis; 5-aminolevulinate from L-glutamyl-tRNA(Glu): step 2/2. The sequence is that of Glutamate-1-semialdehyde 2,1-aminomutase from Chromohalobacter salexigens (strain ATCC BAA-138 / DSM 3043 / CIP 106854 / NCIMB 13768 / 1H11).